The chain runs to 201 residues: Prostamide/prostaglandin F synthase (201 aa).

Phosphotyrosine is present on Tyr108.

The protein belongs to the peroxiredoxin-like PRXL2 family. Prostamide/prostaglandin F synthase subfamily.

It is found in the cytoplasm. The protein resides in the cytosol. It carries out the reaction prostaglandin H2 + [thioredoxin]-dithiol = prostaglandin F2alpha + [thioredoxin]-disulfide. It catalyses the reaction prostamide F2alpha + [thioredoxin]-disulfide = prostamide H2 + [thioredoxin]-dithiol. Functionally, catalyzes the reduction of prostaglandin-ethanolamide H(2) (prostamide H(2)) to prostamide F(2alpha) with NADPH as proton donor. Also able to reduce prostaglandin H(2) to prostaglandin F(2alpha). In Bos taurus (Bovine), this protein is Prostamide/prostaglandin F synthase (PRXL2B).